The sequence spans 225 residues: MDKRISIAIDGPAAAGKSTVAKVVAKKLSYVYIDTGAMYRTITYAALEQKVDIENEEQLMEVVKNVKIEFQQGENTQLVFLNGQDVSEVIRTPEVTNRVSIVAKHRLVREEMVRRQQELAEKGGVVMDGRDIGTHVLPDAEVKIFMLASVEERAERRHLENMNKGFDSNLEQLKEEIAQRDKLDSEREVSPLKKADDALELDTTSLSIEEVVQKIMGIVLGVFAK.

ATP is bound at residue 11–19; sequence GPAAAGKST.

It belongs to the cytidylate kinase family. Type 1 subfamily.

It is found in the cytoplasm. It carries out the reaction CMP + ATP = CDP + ADP. The catalysed reaction is dCMP + ATP = dCDP + ADP. The sequence is that of Cytidylate kinase from Bacillus anthracis (strain A0248).